Consider the following 401-residue polypeptide: Argininosuccinate synthase (401 aa).

An ATP-binding site is contributed by 8–16 (AYSGGLDTS). Tyr85 serves as a coordination point for L-citrulline. ATP is bound at residue Gly115. The L-aspartate site is built by Thr117, Asn121, and Asp122. Asn121 lines the L-citrulline pocket. 4 residues coordinate L-citrulline: Arg125, Ser173, Glu258, and Tyr270.

It belongs to the argininosuccinate synthase family. Type 1 subfamily. As to quaternary structure, homotetramer.

The protein resides in the cytoplasm. It catalyses the reaction L-citrulline + L-aspartate + ATP = 2-(N(omega)-L-arginino)succinate + AMP + diphosphate + H(+). It participates in amino-acid biosynthesis; L-arginine biosynthesis; L-arginine from L-ornithine and carbamoyl phosphate: step 2/3. In Staphylococcus aureus (strain MRSA252), this protein is Argininosuccinate synthase.